A 289-amino-acid polypeptide reads, in one-letter code: Splicing factor C9orf78 homolog (289 aa).

Disordered stretches follow at residues 1–30 and 85–111; these read MRIT…VRLK and RGKD…RRDE. The tract at residues 5–58 is interaction with SNRNP200; it reads GKTFRRRRADSESEEDEQESEEVRLKLEETREVQNLRKRPNGVSAAALLVGEKV. Phosphoserine occurs at positions 15 and 17. Residue Tyr-147 is modified to Phosphotyrosine. Residues 232–283 show a composition bias toward basic and acidic residues; the sequence is LNAPIRRNKEEPKARPLRVGDTEKPEPERSPPNRKRPANEKATDDYHYEKFK. A disordered region spans residues 232–289; sequence LNAPIRRNKEEPKARPLRVGDTEKPEPERSPPNRKRPANEKATDDYHYEKFKKMNRRY. Thr-253 carries the phosphothreonine modification. Position 261 is a phosphoserine (Ser-261).

Belongs to the TLS1 family. In terms of assembly, component of the spliceosome. Interacts with SNRNP200; the interaction is direct. Interacts with PRPF8.

It localises to the nucleus. It is found in the chromosome. The protein resides in the centromere. Functionally, plays a role in pre-mRNA splicing by promoting usage of the upstream 3'-splice site at alternative NAGNAG splice sites; these are sites featuring alternative acceptor motifs separated by only a few nucleotides. May also modulate exon inclusion events. PPlays a role in spliceosomal remodeling by displacing WBP4 from SNRNP200 and may act to inhibit SNRNP200 helicase activity. Binds U5 snRNA. Required for proper chromosome segregation. Not required for splicing of shelterin components. The sequence is that of Splicing factor C9orf78 homolog from Mus musculus (Mouse).